The sequence spans 400 residues: MSSLHKSRIADFQDVLKEPSIVLEKLRELSFSGIPCEGGLRCLCWKILLNYLPLERASWTSILAKQRGLYSQFLREMIIQPGIAKANMGVFREDVTFEDHPLNPNPDSRWNTYFKDNEVLLQIDKDVRRLCPDISFFQRATEYPCLLILDPQNEFETLRKRVEQTTLKSQTVARNRSGVTNMSSPHKNSAPSALNEYEVLPNGCEAHWEVVERILFIYAKLNPGIAYVQGMNEIVGPLYYTFATDPNSEWKEHAEADTFFCFTNLMAEIRDNFIKSLDDSQCGITYKMEKVYSTLKDKDVELYLKLQEQSIKPQFFAFRWLTLLLSQEFLLPDVIRIWDSLFADGNRFDFLLLVCCAMLILIREQLLEGDFTVNMRLLQDYPITDVCQILQKAKELQDSK.

One can recognise a Rab-GAP TBC domain in the interval 35–345 (PCEGGLRCLC…RIWDSLFADG (311 aa)).

Interacts with RAB1A and RAB10; in a GTP-dependent manner. In terms of tissue distribution, expressed in adipocytes.

The protein resides in the membrane. It is found in the cytoplasm. Acts as a GTPase-activating protein for RAB35. Together with RAB35 may be involved in regulation of insulin-induced glucose transporter SLC2A4/GLUT4 translocation to the plasma membrane in adipocytes. The protein is TBC1 domain family member 13 (Tbc1d13) of Mus musculus (Mouse).